Here is a 418-residue protein sequence, read N- to C-terminus: Serine hydroxymethyltransferase (418 aa).

(6S)-5,6,7,8-tetrahydrofolate contacts are provided by residues L121 and 125–127 (GHL). K230 carries the N6-(pyridoxal phosphate)lysine modification. Residues E246 and 355–357 (SPF) each bind (6S)-5,6,7,8-tetrahydrofolate.

Belongs to the SHMT family. Homodimer. Requires pyridoxal 5'-phosphate as cofactor.

The protein localises to the cytoplasm. It catalyses the reaction (6R)-5,10-methylene-5,6,7,8-tetrahydrofolate + glycine + H2O = (6S)-5,6,7,8-tetrahydrofolate + L-serine. It participates in one-carbon metabolism; tetrahydrofolate interconversion. The protein operates within amino-acid biosynthesis; glycine biosynthesis; glycine from L-serine: step 1/1. Its function is as follows. Catalyzes the reversible interconversion of serine and glycine with tetrahydrofolate (THF) serving as the one-carbon carrier. This reaction serves as the major source of one-carbon groups required for the biosynthesis of purines, thymidylate, methionine, and other important biomolecules. Also exhibits THF-independent aldolase activity toward beta-hydroxyamino acids, producing glycine and aldehydes, via a retro-aldol mechanism. The chain is Serine hydroxymethyltransferase from Streptococcus pneumoniae serotype 19F (strain G54).